A 901-amino-acid polypeptide reads, in one-letter code: HTH-type transcriptional regulator MalT (901 aa).

39 to 46 lines the ATP pocket; that stretch reads SPAGYGKT. The HTH luxR-type domain occupies 829 to 894; that stretch reads ELIRTSPLTQ…AAVQHAQKLL (66 aa). A DNA-binding region (H-T-H motif) is located at residues 853-872; that stretch reads NEQIAGELEVAATTIKTHIR.

The protein belongs to the MalT family. As to quaternary structure, monomer in solution. Oligomerizes to an active state in the presence of the positive effectors ATP and maltotriose.

Activated by ATP and maltotriose, which are both required for DNA binding. Positively regulates the transcription of the maltose regulon whose gene products are responsible for uptake and catabolism of malto-oligosaccharides. Specifically binds to the promoter region of its target genes, recognizing a short DNA motif called the MalT box. This Escherichia coli O7:K1 (strain IAI39 / ExPEC) protein is HTH-type transcriptional regulator MalT.